The sequence spans 132 residues: uncharacterized protein (132 aa).

The presence of the two linear plasmids, termed pGKL1 and pGKL2, in strains of Kluyveromyces lactis confers the killer phenotype to the host cell, by promoting the secretion of a toxin able to inhibit the growth of sensitive strains. This is an uncharacterized protein from Kluyveromyces lactis (strain ATCC 8585 / CBS 2359 / DSM 70799 / NBRC 1267 / NRRL Y-1140 / WM37) (Yeast).